The sequence spans 58 residues: MSNTLKITLVKSLIGTPKQQRNVVAGLGLKKLNTTVVRSDTPEIRGMINKISHMLHIA.

Belongs to the universal ribosomal protein uL30 family. Part of the 50S ribosomal subunit.

The protein is Large ribosomal subunit protein uL30 of Pelobacter propionicus (strain DSM 2379 / NBRC 103807 / OttBd1).